Reading from the N-terminus, the 202-residue chain is Endoribonuclease YbeY (202 aa).

Residues histidine 120, histidine 124, and histidine 130 each contribute to the Zn(2+) site.

The protein belongs to the endoribonuclease YbeY family. Zn(2+) is required as a cofactor.

The protein localises to the cytoplasm. Its function is as follows. Single strand-specific metallo-endoribonuclease involved in late-stage 70S ribosome quality control and in maturation of the 3' terminus of the 16S rRNA. The protein is Endoribonuclease YbeY of Corynebacterium kroppenstedtii (strain DSM 44385 / JCM 11950 / CIP 105744 / CCUG 35717).